Consider the following 158-residue polypeptide: Large ribosomal subunit protein uL16 (158 aa).

Belongs to the universal ribosomal protein uL16 family. Part of the 50S ribosomal subunit.

Binds 23S rRNA and is also seen to make contacts with the A and possibly P site tRNAs. This Parasynechococcus marenigrum (strain WH8102) protein is Large ribosomal subunit protein uL16.